Here is a 392-residue protein sequence, read N- to C-terminus: UPF0229 protein CPE1333 (392 aa).

The disordered stretch occupies residues 75-100 (VTTGTGEERRGDRISSDKRKAISNNK). The span at 80–94 (GEERRGDRISSDKRK) shows a compositional bias: basic and acidic residues.

Belongs to the UPF0229 family.

This Clostridium perfringens (strain 13 / Type A) protein is UPF0229 protein CPE1333.